A 186-amino-acid chain; its full sequence is dCTP deaminase (186 aa).

Residue Lys-107–Arg-112 participates in dCTP binding. Catalysis depends on Glu-133, which acts as the Proton donor/acceptor. Residues Gln-152, Tyr-166, Lys-175, and Gln-176 each contribute to the dCTP site.

Belongs to the dCTP deaminase family. As to quaternary structure, homotrimer.

The catalysed reaction is dCTP + H2O + H(+) = dUTP + NH4(+). It functions in the pathway pyrimidine metabolism; dUMP biosynthesis; dUMP from dCTP (dUTP route): step 1/2. In terms of biological role, catalyzes the deamination of dCTP to dUTP. This chain is dCTP deaminase, found in Wolinella succinogenes (strain ATCC 29543 / DSM 1740 / CCUG 13145 / JCM 31913 / LMG 7466 / NCTC 11488 / FDC 602W) (Vibrio succinogenes).